The chain runs to 269 residues: Tryptophan synthase alpha chain (269 aa).

Active-site proton acceptor residues include Glu50 and Asp61.

The protein belongs to the TrpA family. Tetramer of two alpha and two beta chains.

The catalysed reaction is (1S,2R)-1-C-(indol-3-yl)glycerol 3-phosphate + L-serine = D-glyceraldehyde 3-phosphate + L-tryptophan + H2O. It participates in amino-acid biosynthesis; L-tryptophan biosynthesis; L-tryptophan from chorismate: step 5/5. Functionally, the alpha subunit is responsible for the aldol cleavage of indoleglycerol phosphate to indole and glyceraldehyde 3-phosphate. This is Tryptophan synthase alpha chain from Francisella tularensis subsp. holarctica (strain FTNF002-00 / FTA).